A 180-amino-acid polypeptide reads, in one-letter code: MGLTISSLFSRLFGKKQMRILMVGLDAAGKTTILYKLKLGEIVTTIPTIGFNVETVEYKNICFTVWDVGGQDKIRPLWRHYFQNTQGLIFVVDSNDRERIQEGAAVLQKMLLEDELQDAVLLLFANKQDLPNAMAISEMTDKLGLQSLRNRTWYVQATCATQGTGLYEGLDWLSNELSKR.

The N-myristoyl glycine moiety is linked to residue Gly-2. GTP is bound by residues Gly-24–Thr-31, Asp-67–Gln-71, and Asn-126–Asp-129. Phosphoserine is present on Ser-147.

This sequence belongs to the small GTPase superfamily. Arf family. In terms of assembly, forms a complex containing RAB11A, ASAP1, RAB3IP, RAP11FIP3 and ARF4; the complex promotes preciliary trafficking; the complex binds to RHO in photoreceptor cells and promotes RHO ciliary transport.

It localises to the golgi apparatus. It is found in the membrane. Its function is as follows. GTP-binding protein that functions as an allosteric activator of the cholera toxin catalytic subunit, an ADP-ribosyltransferase. Involved in protein trafficking; may modulate vesicle budding and uncoating within the Golgi apparatus. Part of the ciliary targeting complex containing Rab11, ASAP1, Rabin8/RAB3IP, RAB11FIP3 and ARF4, which direct preciliary vesicle trafficking to mother centriole and ciliogenesis initiation. This Mus musculus (Mouse) protein is ADP-ribosylation factor 4 (Arf4).